A 150-amino-acid polypeptide reads, in one-letter code: Regulatory protein RecX (150 aa).

Belongs to the RecX family.

Its subcellular location is the cytoplasm. Its function is as follows. Modulates RecA activity. The sequence is that of Regulatory protein RecX from Ectopseudomonas mendocina (strain ymp) (Pseudomonas mendocina).